The following is a 1271-amino-acid chain: SR-related and CTD-associated factor 8 (1271 aa).

A CID domain is found at 1–139; sequence MEAVKTFNSE…PLLDMAAGIP (139 aa). Thr6 is subject to Phosphothreonine. Lys18 is covalently cross-linked (Glycyl lysine isopeptide (Lys-Gly) (interchain with G-Cter in SUMO1)). Positions 270–283 are enriched in basic and acidic residues; sequence GEDSEHSEEPKKEI. Disordered regions lie at residues 270–289, 322–354, and 384–468; these read GEDS…SQLS, QQQP…SQQH, and EEVF…PPIR. Ser273 is subject to Phosphoserine. The segment covering 327 to 354 has biased composition (polar residues); it reads KATPQDSQEGTFGSEHSASPSQGSSQQH. Positions 394-443 are enriched in basic residues; the sequence is VAVRSRSRTHSRSRSRSPRKRRSRSRSGSRKRKHRKRSRSRSRERKRKSS. Residues 447–461 are compositionally biased toward basic and acidic residues; the sequence is SSERRAREREKERQK. One can recognise an RRM domain in the interval 477–551; sequence TTLWVGQVDK…KVIKIAWALN (75 aa). Thr615 bears the Phosphothreonine mark. Ser617 and Ser779 each carry phosphoserine. The segment at 899-918 is disordered; the sequence is TQPPAGPQNLPPLSIPNQRM. The segment covering 902–912 has biased composition (pro residues); that stretch reads PAGPQNLPPLS. Asymmetric dimethylarginine is present on residues Arg917, Arg927, and Arg938. 2 stretches are compositionally biased toward pro residues: residues 945–956 and 963–972; these read GIPPQRGIPPPS and HPPPRGPFPP. The disordered stretch occupies residues 945-1064; that stretch reads GIPPQRGIPP…DGRDHFGRPP (120 aa). Basic and acidic residues-rich tracts occupy residues 1011–1027 and 1034–1064; these read EGDR…RESI and DVRD…GRPP. Arg1073 bears the Asymmetric dimethylarginine mark. The tract at residues 1198-1271 is disordered; that stretch reads YFEGATSQRK…VVESTETEGT (74 aa). A compositionally biased stretch (acidic residues) spans 1255 to 1271; sequence ADIESEPVVESTETEGT.

In terms of assembly, interacts with POLR2A; via C-terminal heptapeptide repeat domain (CTD) phosphorylated at 'Ser-2' and 'Ser-5'. Identified in a complex with CDC5L and other spliceosomal proteins.

Its subcellular location is the nucleus. The protein localises to the nucleus matrix. Anti-terminator protein required to prevent early mRNA termination during transcription. Together with SCAF4, acts by suppressing the use of early, alternative poly(A) sites, thereby preventing the accumulation of non-functional truncated proteins. Mechanistically, associates with the phosphorylated C-terminal heptapeptide repeat domain (CTD) of the largest RNA polymerase II subunit (POLR2A), and subsequently binds nascent RNA upstream of early polyadenylation sites to prevent premature mRNA transcript cleavage and polyadenylation. Independently of SCAF4, also acts as a positive regulator of transcript elongation. The sequence is that of SR-related and CTD-associated factor 8 from Homo sapiens (Human).